Reading from the N-terminus, the 699-residue chain is D-(-)-3-hydroxybutyrate oligomer hydrolase (699 aa).

The N-terminal stretch at 1-33 (MTAIRGGSRRAPGLALALLGGVLLGACHGDENA) is a signal peptide. Ser-311 (charge relay system) is an active-site residue.

The protein belongs to the D-(-)-3-hydroxybutyrate oligomer hydrolase family.

It localises to the secreted. It carries out the reaction (3R)-hydroxybutanoate dimer + H2O = 2 (R)-3-hydroxybutanoate + H(+). The protein operates within lipid metabolism; butanoate metabolism. Participates in the degradation of poly-3-hydroxybutyrate (PHB). It works downstream of poly(3-hydroxybutyrate) depolymerase, hydrolyzing D(-)-3-hydroxybutyrate oligomers of various length (3HB-oligomers) into 3HB-monomers. This Burkholderia mallei (strain ATCC 23344) protein is D-(-)-3-hydroxybutyrate oligomer hydrolase.